The following is a 365-amino-acid chain: Alanine racemase (365 aa).

Catalysis depends on Lys-32, which acts as the Proton acceptor; specific for D-alanine. N6-(pyridoxal phosphate)lysine is present on Lys-32. Arg-128 is a substrate binding site. Tyr-257 acts as the Proton acceptor; specific for L-alanine in catalysis. Met-305 is a substrate binding site.

It belongs to the alanine racemase family. Requires pyridoxal 5'-phosphate as cofactor.

The catalysed reaction is L-alanine = D-alanine. It functions in the pathway amino-acid biosynthesis; D-alanine biosynthesis; D-alanine from L-alanine: step 1/1. Its function is as follows. Catalyzes the interconversion of L-alanine and D-alanine. May also act on other amino acids. The sequence is that of Alanine racemase (alr) from Francisella tularensis subsp. mediasiatica (strain FSC147).